An 880-amino-acid chain; its full sequence is Leucine-rich repeat-containing protein 66 (880 aa).

The chain crosses the membrane as a helical span at residues 4-24 (LYFRVITIVIGLYFTGIMTNA). Asparagine 45 carries an N-linked (GlcNAc...) asparagine glycan. LRR repeat units follow at residues 86 to 107 (KIKH…PFAY), 110 to 130 (ALEV…DLLS), 149 to 171 (LLKV…WKLK), 172 to 193 (SLQS…DFHN), 196 to 217 (QLEN…AFKD), and 220 to 241 (KLQV…MIIA). N-linked (GlcNAc...) asparagine glycosylation occurs at asparagine 115. The segment at 319-368 (SKAERPQGGRHTGISTLGKKAKAGSGLRKKQRRLPRSVRSTRDVQAAGKK) is disordered. The span at 337-354 (KKAKAGSGLRKKQRRLPR) shows a compositional bias: basic residues. Residues 376-396 (ALAVCLSVFITFLVAFSLGAF) traverse the membrane as a helical segment. Disordered stretches follow at residues 463–504 (PHPH…NDGA) and 679–746 (VTPA…SKDN). Positions 483–493 (GSSQSPGQCGD) are enriched in polar residues. A compositionally biased stretch (acidic residues) spans 697 to 707 (CELESDCDSDE). The span at 709-720 (SLFTLSSISSES) shows a compositional bias: low complexity. Residue serine 723 is modified to Phosphoserine. The segment covering 737-746 (DESSGASKDN) has biased composition (polar residues). A glycan (N-linked (GlcNAc...) asparagine) is linked at asparagine 746. A Phosphoserine modification is found at serine 752. N-linked (GlcNAc...) asparagine glycosylation occurs at asparagine 756. Disordered regions lie at residues 764 to 816 (GKCK…PLGD) and 855 to 880 (TPPC…DILK). Basic and acidic residues-rich tracts occupy residues 788–800 (THLE…DRSE) and 865–880 (DPDK…DILK).

Its subcellular location is the membrane. The sequence is that of Leucine-rich repeat-containing protein 66 (LRRC66) from Homo sapiens (Human).